The following is a 1828-amino-acid chain: Separin (1828 aa).

One can recognise a Peptidase C50 domain in the interval 1647 to 1741; it reads KEAGSYILNP…SGALYECGSF (95 aa). Cysteine 1730 is an active-site residue.

Interacts with cut2. Interacts with rad21.

It is found in the cytoplasm. The protein localises to the nucleus. It catalyses the reaction All bonds known to be hydrolyzed by this endopeptidase have arginine in P1 and an acidic residue in P4. P6 is often occupied by an acidic residue or by a hydroxy-amino-acid residue, the phosphorylation of which enhances cleavage.. It is inactivated via its interaction with cut2, which probably covers its active site. Cut2 degradation at anaphase, liberates it and triggers rad21 cleavage. Caspase-like protease, which plays a central role in the chromosome segregation by cleaving the rad21 subunit of the cohesin complex at the onset of anaphase. During most of the cell cycle, it is inactivated by securin/cut2 protein. It is also required for pointed nuclear formation. The chain is Separin (cut1) from Schizosaccharomyces pombe (strain 972 / ATCC 24843) (Fission yeast).